Here is a 488-residue protein sequence, read N- to C-terminus: UDP-N-acetylmuramoyl-L-alanyl-D-glutamate--2,6-diaminopimelate ligase (488 aa).

UDP-N-acetyl-alpha-D-muramoyl-L-alanyl-D-glutamate-binding positions include leucine 24, serine 26, and 41–43 (HQV). 113 to 119 (GTNGKTT) contacts ATP. UDP-N-acetyl-alpha-D-muramoyl-L-alanyl-D-glutamate contacts are provided by residues asparagine 154, 155-156 (TT), serine 182, glutamine 188, and arginine 190. Lysine 222 is subject to N6-carboxylysine. Residues arginine 386, 410 to 413 (DNPR), glycine 461, and glutamate 465 each bind meso-2,6-diaminopimelate. The short motif at 410–413 (DNPR) is the Meso-diaminopimelate recognition motif element.

The protein belongs to the MurCDEF family. MurE subfamily. It depends on Mg(2+) as a cofactor. In terms of processing, carboxylation is probably crucial for Mg(2+) binding and, consequently, for the gamma-phosphate positioning of ATP.

The protein localises to the cytoplasm. It carries out the reaction UDP-N-acetyl-alpha-D-muramoyl-L-alanyl-D-glutamate + meso-2,6-diaminopimelate + ATP = UDP-N-acetyl-alpha-D-muramoyl-L-alanyl-gamma-D-glutamyl-meso-2,6-diaminopimelate + ADP + phosphate + H(+). It participates in cell wall biogenesis; peptidoglycan biosynthesis. Functionally, catalyzes the addition of meso-diaminopimelic acid to the nucleotide precursor UDP-N-acetylmuramoyl-L-alanyl-D-glutamate (UMAG) in the biosynthesis of bacterial cell-wall peptidoglycan. The chain is UDP-N-acetylmuramoyl-L-alanyl-D-glutamate--2,6-diaminopimelate ligase from Haemophilus influenzae (strain PittGG).